The chain runs to 391 residues: Phosphoglycerate kinase (391 aa).

Residues 21–23 (DLN), R36, 59–62 (HLGR), R113, and R146 contribute to the substrate site. Residues K197, E319, and 345-348 (GGDT) each bind ATP.

It belongs to the phosphoglycerate kinase family. Monomer.

It localises to the cytoplasm. The enzyme catalyses (2R)-3-phosphoglycerate + ATP = (2R)-3-phospho-glyceroyl phosphate + ADP. The protein operates within carbohydrate degradation; glycolysis; pyruvate from D-glyceraldehyde 3-phosphate: step 2/5. In Stenotrophomonas maltophilia (strain R551-3), this protein is Phosphoglycerate kinase.